The primary structure comprises 318 residues: D-alanine--D-alanine ligase (318 aa).

Residues 116–311 (KQVWQSLGIP…FQQLVLAILA (196 aa)) form the ATP-grasp domain. 142 to 197 (STELGFPLIVKPAHEGSSIGMAKVNSAQELVAAWQDAAKYDSQVLVEQWIHGPEFT) contacts ATP. Mg(2+) is bound by residues Asp265, Glu278, and Asn280.

Belongs to the D-alanine--D-alanine ligase family. Mg(2+) is required as a cofactor. Mn(2+) serves as cofactor.

It localises to the cytoplasm. It catalyses the reaction 2 D-alanine + ATP = D-alanyl-D-alanine + ADP + phosphate + H(+). The protein operates within cell wall biogenesis; peptidoglycan biosynthesis. Its function is as follows. Cell wall formation. The sequence is that of D-alanine--D-alanine ligase from Pseudomonas putida (strain GB-1).